The following is a 338-amino-acid chain: Heat shock factor 2-binding protein (338 aa).

A disordered region spans residues 1-20 (MAATVGDGSGTEEACRNMES). A coiled-coil region spans residues 12 to 126 (EEACRNMESK…LLQQAEYCTQ (115 aa)). The tract at residues 18–55 (MESKEEFVKVRKKDLERLTTEVMQIRDFLPRILNGELL) is interaction with BRME1. Residues 87–338 (ARLETAQADS…EDLRALDCNV (252 aa)) are interaction with BRCA2.

Interacts (via C-terminus) with BNC1. Associates with HSF2. The interaction seems to occur between the trimerization domain of HSF2 and the N-terminal hydrophilic region of HSF2BP. Interacts (via N-terminus) with BRME1. Interacts with BRCA2 and BRME1; the interactions are direct and allow the formation of a ternary complex. The complex BRME1:HSF2BP:BRCA2 interacts with SPATA22, MEIOB and RAD51. Post-translationally, sumoylated by UBE2I in response to MEKK1-mediated stimuli. In terms of tissue distribution, expressed in testis and, to a lesser extent, in lung and muscle.

The protein localises to the cytoplasm. It is found in the chromosome. Its function is as follows. Meiotic recombination factor component of recombination bridges involved in meiotic double-strand break repair. Modulates the localization of recombinases DMC1:RAD51 to meiotic double-strand break (DSB) sites through the interaction with BRCA2 and its recruitment during meiotic recombination. Indispensable for the DSB repair, homologous synapsis, and crossover formation that are needed for progression past metaphase I, is essential for spermatogenesis and male fertility. Required for proper recombinase recruitment in female meiosis. Inhibits BNC1 transcriptional activity during spermatogenesis, probably by sequestering it in the cytoplasm. May be involved in modulating HSF2 activation in testis. This Mus musculus (Mouse) protein is Heat shock factor 2-binding protein.